We begin with the raw amino-acid sequence, 177 residues long: MLKDLYKTQIVPSLQNKLGYSNVMQVPKIVKVCLNMGLGIRGSDSKVMNSCVRDLALIAGQKPVATSVKKSIAGFKIRKGFPIGCKVTLRNNKMYEFLERLIYVVLPREQDFKGLSINQFDGCGNISIGIKEHISFLEVDYDKIDKILGLDINIVTNAVNNKDAKLLLMEFGLPFIN.

It belongs to the universal ribosomal protein uL5 family. In terms of assembly, part of the 50S ribosomal subunit; part of the 5S rRNA/L5/L18/L25 subcomplex. Contacts the 5S rRNA and the P site tRNA. Forms a bridge to the 30S subunit in the 70S ribosome.

This is one of the proteins that bind and probably mediate the attachment of the 5S RNA into the large ribosomal subunit, where it forms part of the central protuberance. In the 70S ribosome it contacts protein S13 of the 30S subunit (bridge B1b), connecting the 2 subunits; this bridge is implicated in subunit movement. Contacts the P site tRNA; the 5S rRNA and some of its associated proteins might help stabilize positioning of ribosome-bound tRNAs. This is Large ribosomal subunit protein uL5 from Ehrlichia ruminantium (strain Welgevonden).